The chain runs to 352 residues: Phospho-N-acetylmuramoyl-pentapeptide-transferase (352 aa).

A run of 10 helical transmembrane segments spans residues 16–36, 66–86, 88–108, 129–149, 160–180, 191–211, 228–248, 255–275, 280–300, and 329–349; these read YITFRAGAAFFIAFFLALLFM, TPTMGGLVFIGATLLASLLCA, LNNLYVLAGLAVILLFGLIGL, MLYLVLAGASVSAALFYFGME, PLLSMGIVAILFWTLVMVATS, GLATVPSVYALVSLSVFVYIA, SGEAVIVSAALVGALIGFLWF, LFMGDSGSLSIGGFIAYMAII, FLLFLIGSIFVIETVSVILQI, and KIIVRFWIIALMSNIIALLTL.

The protein belongs to the glycosyltransferase 4 family. MraY subfamily. Mg(2+) serves as cofactor.

Its subcellular location is the cell inner membrane. The enzyme catalyses UDP-N-acetyl-alpha-D-muramoyl-L-alanyl-gamma-D-glutamyl-meso-2,6-diaminopimeloyl-D-alanyl-D-alanine + di-trans,octa-cis-undecaprenyl phosphate = di-trans,octa-cis-undecaprenyl diphospho-N-acetyl-alpha-D-muramoyl-L-alanyl-D-glutamyl-meso-2,6-diaminopimeloyl-D-alanyl-D-alanine + UMP. Its pathway is cell wall biogenesis; peptidoglycan biosynthesis. Catalyzes the initial step of the lipid cycle reactions in the biosynthesis of the cell wall peptidoglycan: transfers peptidoglycan precursor phospho-MurNAc-pentapeptide from UDP-MurNAc-pentapeptide onto the lipid carrier undecaprenyl phosphate, yielding undecaprenyl-pyrophosphoryl-MurNAc-pentapeptide, known as lipid I. The chain is Phospho-N-acetylmuramoyl-pentapeptide-transferase from Wolinella succinogenes (strain ATCC 29543 / DSM 1740 / CCUG 13145 / JCM 31913 / LMG 7466 / NCTC 11488 / FDC 602W) (Vibrio succinogenes).